The chain runs to 396 residues: KiSS-1 receptor (396 aa).

Residues 1–46 (MAAEATLGPNVSWWAPSNASGCPGCGVNASDGPGSAPRPLDAWLVP) lie on the Extracellular side of the membrane. N-linked (GlcNAc...) asparagine glycans are attached at residues N10, N18, and N28. A helical transmembrane segment spans residues 47–67 (LFFAALMLLGLVGNSLVIFVI). Topologically, residues 68-90 (CRHKHMQTVTNFYIANLAATDVT) are cytoplasmic. The helical transmembrane segment at 91-111 (FLLCCVPFTALLYPLPTWVLG) threads the bilayer. At 112–120 (DFMCKFVNY) the chain is on the extracellular side. Cysteines 115 and 191 form a disulfide. The helical transmembrane segment at 121-138 (IQQVSVQATCATLTAMSV) threads the bilayer. The Cytoplasmic segment spans residues 139–159 (DRWYVTVFPLRALHRRTPRLA). A helical membrane pass occupies residues 160–180 (LTVSLSIWVGSAAVSAPVLAL). Residues 181–202 (HRLSPGPHTYCSEAFPSRALER) are Extracellular-facing. The helical transmembrane segment at 203 to 223 (AFALYNLLALYLLPLLATCAC) threads the bilayer. Topologically, residues 224–264 (YGAMLRHLGRAAVRPAPTDGALQGQLLAQRAGAVRTKVSRL) are cytoplasmic. The helical transmembrane segment at 265–285 (VAAVVLLFAACWGPIQLFLVL) threads the bilayer. Residues 286 to 305 (QALGPSGAWHPRSYAAYALK) are Extracellular-facing. A helical membrane pass occupies residues 306 to 326 (IWAHCMSYSNSALNPLLYAFL). Residues 327 to 396 (GSHFRQAFCR…SVQDEHTAPL (70 aa)) lie on the Cytoplasmic side of the membrane. The interval 346 to 396 (RRPHASAHSDRAAPHSVPHSRAAHPVRVRTPEPGNPVRRSPSVQDEHTAPL) is disordered.

It belongs to the G-protein coupled receptor 1 family. Highest expression levels in the cerebrum and cecum. Moderate expression in the ovary, colon and placenta. Low levels in the uterus, small intestine, and thymus. Expressed only moderately in the placenta. No expression in kidney tissues. Has a complex and abundant central nervous system expression pattern. Expressed in brain regions such as pons, midbrain, thalamus, hypothalamus, hippocampus, amygdala, cortex, frontal cortex, and striatum. No expression in the cerebellum. Persistent expression is detected in hypothalamus throughout postnatal development, with maximum expression levels at puberty in both male and female. Hypothalamic expression changed throughout the estrus cycle and is significantly increased after gonadectomy, a rise that is prevented by sex steroid replacement both in males and females.

It is found in the cell membrane. Functionally, receptor for metastin, a C-terminally amidated peptide of KiSS1. KiSS1 is a metastasis suppressor protein. Activation of the receptor inhibits cell proliferation and cell migration, key characteristics of tumor metastasis. The receptor is essential for normal gonadotropin-released hormone physiology and for puberty. The hypothalamic KiSS1/KISS1R system is a pivotal factor in central regulation of the gonadotropic axis at puberty and in adulthood. Analysis of the transduction pathways activated by the receptor identifies coupling to phospholipase C and intracellular calcium release through pertussis toxin-insensitive G(q) proteins. In Rattus norvegicus (Rat), this protein is KiSS-1 receptor (Kiss1r).